Reading from the N-terminus, the 119-residue chain is Small ribosomal subunit protein uS13 (119 aa).

Residues 90–119 (IRHRRGLPLRGQRTRSNARTRKGKRKPIRS) form a disordered region. Positions 91–119 (RHRRGLPLRGQRTRSNARTRKGKRKPIRS) are enriched in basic residues.

This sequence belongs to the universal ribosomal protein uS13 family. Part of the 30S ribosomal subunit. Forms a loose heterodimer with protein S19. Forms two bridges to the 50S subunit in the 70S ribosome.

In terms of biological role, located at the top of the head of the 30S subunit, it contacts several helices of the 16S rRNA. In the 70S ribosome it contacts the 23S rRNA (bridge B1a) and protein L5 of the 50S subunit (bridge B1b), connecting the 2 subunits; these bridges are implicated in subunit movement. Contacts the tRNAs in the A and P-sites. The chain is Small ribosomal subunit protein uS13 from Coxiella burnetii (strain CbuK_Q154) (Coxiella burnetii (strain Q154)).